The chain runs to 180 residues: Nucleoid-associated protein At4g30620, chloroplastic (180 aa).

Residues 1-48 constitute a chloroplast transit peptide; sequence MASTATNTDFFKTLLSPFSNGNAAQRSSRQNIVWLNRKQSGNNNRSLR. The disordered stretch occupies residues 45-65; it reads RSLRVNGLFGGGKKDNKEDGQ. Positions 56 to 65 are enriched in basic and acidic residues; it reads GKKDNKEDGQ.

The protein belongs to the YbaB/EbfC family. Homodimer. Binds to the translation initiation factors TIF3E1.

It localises to the plastid. The protein resides in the chloroplast. Its function is as follows. Binds to DNA and alters its conformation. May be involved in regulation of gene expression, nucleoid organization and DNA protection. The polypeptide is Nucleoid-associated protein At4g30620, chloroplastic (Arabidopsis thaliana (Mouse-ear cress)).